We begin with the raw amino-acid sequence, 173 residues long: MPRSNRNDNFIDKSFTVMADLIVKLLPINARAKEAYVYYRDGLSAQNDGDYAEALENYEESLKLEENPIDRGETLKNMAIIYMSNGEEDRALATYQKALDENPKQPSCLKNMGLIFEKRGRTAEEEGRRDDADGWFDQAAEVWTQAVRLNPGGYLDIENWLKSTGRSNVDVYF.

TPR repeat units lie at residues 35–68 (AYVY…EENP), 72–105 (GETL…NPKQ), and 120–153 (GRTA…NPGG).

Belongs to the Ycf3 family.

The protein resides in the cellular thylakoid membrane. Essential for the assembly of the photosystem I (PSI) complex. May act as a chaperone-like factor to guide the assembly of the PSI subunits. The protein is Photosystem I assembly protein Ycf3 of Synechococcus sp. (strain WH7803).